Here is a 161-residue protein sequence, read N- to C-terminus: uncharacterized protein (161 aa).

Residues 30 to 50 form a helical membrane-spanning segment; the sequence is GVILFRLLGVILFRLLGVILF.

Its subcellular location is the membrane. This is an uncharacterized protein from Homo sapiens (Human).